A 105-amino-acid polypeptide reads, in one-letter code: Large ribosomal subunit protein uL24 (105 aa).

This sequence belongs to the universal ribosomal protein uL24 family. In terms of assembly, part of the 50S ribosomal subunit.

One of two assembly initiator proteins, it binds directly to the 5'-end of the 23S rRNA, where it nucleates assembly of the 50S subunit. Its function is as follows. One of the proteins that surrounds the polypeptide exit tunnel on the outside of the subunit. This Azoarcus sp. (strain BH72) protein is Large ribosomal subunit protein uL24.